The primary structure comprises 212 residues: 3-oxo-tetronate 4-phosphate decarboxylase (212 aa).

Residue Glu79 is the Proton acceptor of the active site. 3 residues coordinate Zn(2+): Glu79, His98, and His100. Catalysis depends on Tyr125, which acts as the Proton donor. His165 contributes to the Zn(2+) binding site.

It belongs to the aldolase class II family. AraD/FucA subfamily. It depends on Zn(2+) as a cofactor.

The catalysed reaction is 3-dehydro-4-O-phospho-D-erythronate + H(+) = dihydroxyacetone phosphate + CO2. It carries out the reaction 3-dehydro-4-O-phospho-L-erythronate + H(+) = dihydroxyacetone phosphate + CO2. Catalyzes the decarboxylation of 3-oxo-tetronate 4-phosphate to dihydroxyacetone phosphate (DHAP) and CO(2). The polypeptide is 3-oxo-tetronate 4-phosphate decarboxylase (Escherichia coli O6:H1 (strain CFT073 / ATCC 700928 / UPEC)).